Reading from the N-terminus, the 546-residue chain is Fusion glycoprotein F0 (546 aa).

Positions 1 to 19 are cleaved as a signal peptide; the sequence is MGILFAALLAMTNPHLATG. Over 20–491 the chain is Extracellular; sequence QIHWGNLSKI…NIKGVSVTNT (472 aa). Residues N25, N57, and N63 are each glycosylated (N-linked (GlcNAc...) asparagine; by host). Residues 109-133 form a fusion peptide region; that stretch reads FAGVVLAGAALGVATAAQITAGIAL. Residues 134 to 162 are a coiled coil; the sequence is HQSMMNSQAIESLKASLETTNQAIEEIRQ. 4 cysteine pairs are disulfide-bonded: C330–C339, C354–C362, C386–C391, and C393–C416. Residues 458-483 are a coiled coil; that stretch reads NLWNAVTKLEKAKDLLDSSDLILENI. A helical membrane pass occupies residues 492–512; the sequence is GYILVGVGLIAVVGILIITCC. Topologically, residues 513–546 are cytoplasmic; that stretch reads CKKRRTDNKVSTMVLNPGLRPDLTGTSKSYVRSL.

It belongs to the paramyxoviruses fusion glycoprotein family. Homotrimer of disulfide-linked F1-F2. In terms of processing, the inactive precursor F0 is glycosylated and proteolytically cleaved into F1 and F2 to be functionally active. The cleavage is mediated by cellular proteases during the transport and maturation of the polypeptide.

It localises to the virion membrane. It is found in the host cell membrane. Its function is as follows. Class I viral fusion protein. Under the current model, the protein has at least 3 conformational states: pre-fusion native state, pre-hairpin intermediate state, and post-fusion hairpin state. During viral and plasma cell membrane fusion, the heptad repeat (HR) regions assume a trimer-of-hairpins structure, positioning the fusion peptide in close proximity to the C-terminal region of the ectodomain. The formation of this structure appears to drive apposition and subsequent fusion of viral and plasma cell membranes. Directs fusion of viral and cellular membranes leading to delivery of the nucleocapsid into the cytoplasm. This fusion is pH independent and occurs directly at the outer cell membrane. The trimer of F1-F2 (F protein) probably interacts with HN at the virion surface. Upon HN binding to its cellular receptor, the hydrophobic fusion peptide is unmasked and interacts with the cellular membrane, inducing the fusion between cell and virion membranes. Later in infection, F proteins expressed at the plasma membrane of infected cells could mediate fusion with adjacent cells to form syncytia, a cytopathic effect that could lead to tissue necrosis. This Bos indicus (Zebu) protein is Fusion glycoprotein F0 (F).